The following is a 562-amino-acid chain: Protein FAM222B (562 aa).

2 stretches are compositionally biased toward low complexity: residues 155–167 and 183–201; these read QQAL…LAHA and ALSH…HPQP. Disordered stretches follow at residues 155–203, 219–245, and 537–562; these read QQAL…QPMA, LQHP…VTVS, and AHRA…PGYR.

Belongs to the FAM222 family.

In Homo sapiens (Human), this protein is Protein FAM222B (FAM222B).